Consider the following 142-residue polypeptide: UPF0179 protein PH1477 (142 aa).

Belongs to the UPF0179 family.

This is UPF0179 protein PH1477 from Pyrococcus horikoshii (strain ATCC 700860 / DSM 12428 / JCM 9974 / NBRC 100139 / OT-3).